Here is a 570-residue protein sequence, read N- to C-terminus: Sulfite reductase [NADPH] hemoprotein beta-component (570 aa).

Residues Cys434, Cys440, Cys479, and Cys483 each coordinate [4Fe-4S] cluster. Cys483 serves as a coordination point for siroheme.

It belongs to the nitrite and sulfite reductase 4Fe-4S domain family. In terms of assembly, alpha(8)-beta(8). The alpha component is a flavoprotein, the beta component is a hemoprotein. Siroheme serves as cofactor. [4Fe-4S] cluster is required as a cofactor.

The catalysed reaction is hydrogen sulfide + 3 NADP(+) + 3 H2O = sulfite + 3 NADPH + 4 H(+). It participates in sulfur metabolism; hydrogen sulfide biosynthesis; hydrogen sulfide from sulfite (NADPH route): step 1/1. In terms of biological role, component of the sulfite reductase complex that catalyzes the 6-electron reduction of sulfite to sulfide. This is one of several activities required for the biosynthesis of L-cysteine from sulfate. The protein is Sulfite reductase [NADPH] hemoprotein beta-component of Shigella flexneri serotype 5b (strain 8401).